The chain runs to 637 residues: MNTGIIDLFDNHVDSIPTILPHQLATLDYLVRTIIDENRSVLLFHIMGSGKTIIALLFALVASRFKKVYILVPNINILKIFNYNMGVAMNLFNDEFIAENIFIHSTTSFYSLNYNDNVINYNGLSRYNNSIFIVDEAHNIFGNNTGELMTVIKNKNKIPFLLLSGSPITNTPNTLGHIIDLMSEETIDFGEIISRGKKVIQTLLNERGVNVLKDLLKGRISYYEMPDKDLPTIRYHGRKFLDTRVVYCHMSKLQERDYMITRRQLCYHEMFDKNMYNVSTAVLGQLNLMNNLDTLFQEQDKELYPNLKINNGVLYGEELVTLNISSKFKYFINRIQTLNGKHFIYFSNSTYGGLVIKYIMLSNGYSEYNGSQGTNPHMINGKPKTFAIVTSKMKSSLEDLLDVYNSPENDDGSQLMFLFSSNIMSESYTLKEVRHIWFMTIPDTFSQYNQILGRSIRKFSYADISEPVNVYLLAAVYSDFNDEVTSLNDYTQDELINVLPFDIKKLLYLKFKTKETNRIYSILQEMSETYSLPPHPSIVKVLLGELVRQFFYNNSRIKYNDSKLLKMVTSVIKNKEDARNYIDDIVNGHFFVSNKVFDKSLLYKYENDIITVPFRLSYEPFVWGVNFRKEYNVVSSP.

One can recognise a Helicase ATP-binding domain in the interval 32–185; that stretch reads RTIIDENRSV…GHIIDLMSEE (154 aa). 45–52 contributes to the ATP binding site; sequence HIMGSGKT. A DEXH box motif is present at residues 135 to 138; sequence DEAH. In terms of domain architecture, Helicase C-terminal spans 327–507; sequence KFKYFINRIQ…VLPFDIKKLL (181 aa).

It belongs to the helicase family. VETF subfamily. In terms of assembly, heterodimer of a 70 kDa and a 82 kDa subunit. Part of the early transcription complex composed of ETF, RAP94/OPG109, and the DNA-directed RNA polymerase.

It is found in the virion. In terms of biological role, acts with RNA polymerase to initiate transcription from early gene promoters. Is recruited by the RPO-associated protein of 94 kDa RAP94/OPG109 to form the early transcription complex, which also contains the core RNA polymerase. ETF heterodimer binds to early gene promoters. This Homo sapiens (Human) protein is Early transcription factor 70 kDa subunit (OPG118).